The sequence spans 70 residues: DNA gyrase inhibitor YacG (70 aa).

Zn(2+) contacts are provided by cysteine 21, cysteine 24, cysteine 36, and cysteine 40.

This sequence belongs to the DNA gyrase inhibitor YacG family. Interacts with GyrB. Zn(2+) serves as cofactor.

Its function is as follows. Inhibits all the catalytic activities of DNA gyrase by preventing its interaction with DNA. Acts by binding directly to the C-terminal domain of GyrB, which probably disrupts DNA binding by the gyrase. The chain is DNA gyrase inhibitor YacG from Rhizobium meliloti (strain 1021) (Ensifer meliloti).